Here is a 277-residue protein sequence, read N- to C-terminus: Large ribosomal subunit protein uL2 (277 aa).

Disordered stretches follow at residues 1-55 (MGIR…RHQG) and 217-277 (KRPS…KKKR). Residues 37–55 (LHSKGGRNGHGRITARHQG) are compositionally biased toward basic residues.

Belongs to the universal ribosomal protein uL2 family. As to quaternary structure, part of the 50S ribosomal subunit. Forms a bridge to the 30S subunit in the 70S ribosome.

In terms of biological role, one of the primary rRNA binding proteins. Required for association of the 30S and 50S subunits to form the 70S ribosome, for tRNA binding and peptide bond formation. It has been suggested to have peptidyltransferase activity; this is somewhat controversial. Makes several contacts with the 16S rRNA in the 70S ribosome. The protein is Large ribosomal subunit protein uL2 of Thermobifida fusca (strain YX).